Here is a 393-residue protein sequence, read N- to C-terminus: Methylthioribose-1-phosphate isomerase (393 aa).

The active-site Proton donor is aspartate 265.

The protein belongs to the eIF-2B alpha/beta/delta subunits family. MtnA subfamily.

It is found in the cytoplasm. Its subcellular location is the nucleus. The enzyme catalyses 5-(methylsulfanyl)-alpha-D-ribose 1-phosphate = 5-(methylsulfanyl)-D-ribulose 1-phosphate. Its pathway is amino-acid biosynthesis; L-methionine biosynthesis via salvage pathway; L-methionine from S-methyl-5-thio-alpha-D-ribose 1-phosphate: step 1/6. Catalyzes the interconversion of methylthioribose-1-phosphate (MTR-1-P) into methylthioribulose-1-phosphate (MTRu-1-P). This chain is Methylthioribose-1-phosphate isomerase, found in Cryptococcus neoformans var. neoformans serotype D (strain JEC21 / ATCC MYA-565) (Filobasidiella neoformans).